A 248-amino-acid chain; its full sequence is Small ribosomal subunit protein uS3 (248 aa).

Positions 38–106 (IREFLSEGLE…QVQLNILEVK (69 aa)) constitute a KH type-2 domain. The segment covering 214–229 (SLMNARDERPSRGGRR) has biased composition (basic and acidic residues). The interval 214-248 (SLMNARDERPSRGGRRERPRRGGARRQRAEKKQEG) is disordered. Residues 230 to 242 (ERPRRGGARRQRA) show a composition bias toward basic residues.

Belongs to the universal ribosomal protein uS3 family. In terms of assembly, part of the 30S ribosomal subunit. Forms a tight complex with proteins S10 and S14.

Functionally, binds the lower part of the 30S subunit head. Binds mRNA in the 70S ribosome, positioning it for translation. The protein is Small ribosomal subunit protein uS3 of Corynebacterium urealyticum (strain ATCC 43042 / DSM 7109).